We begin with the raw amino-acid sequence, 303 residues long: Tumor necrosis factor receptor type 1-associated DEATH domain protein (303 aa).

Residues 141–157 carry the Nuclear export signal motif; that stretch reads QKDDELAEIDERLKSIK. One can recognise a Death domain in the interval 208–298; it reads TSAHIQHFAK…SIALDLLSLN (91 aa). A Nuclear localization signal motif is present at residues 224–237; sequence KPVGRSLGKTCRAL.

Heterodimer with tnfrsf1a.

The protein localises to the nucleus. It localises to the cytoplasm. It is found in the cytoskeleton. Adapter molecule for tnfrsf1a that specifically associates with the cytoplasmic domain of activated tnfrsf1a mediating its interaction with fadd. The chain is Tumor necrosis factor receptor type 1-associated DEATH domain protein from Xenopus laevis (African clawed frog).